The sequence spans 220 residues: Inner membrane protein YqjA (220 aa).

The Periplasmic segment spans residues 1–27 (MELLTQLLQALWAQDFETLANPSMIGM). Residues 28-48 (LYFVLFVILFLENGLLPAAFL) traverse the membrane as a helical segment. Topologically, residues 49–52 (PGDS) are cytoplasmic. A run of 2 helical transmembrane segments spans residues 53-73 (LLVL…QTIL) and 74-94 (LLTV…RWLG). Residues 95 to 154 (NTRTVQNWLSHLPAHYHQRAHHLFHKHGLSALLIGRFIAFVRTLLPTIAGLSGLNNARFQ) are Cytoplasmic-facing. Residues 155-175 (FFNWMSGLLWVLILTTLGYML) traverse the membrane as a helical segment. Residues 176–191 (GKTPVFLKYEDQLMSC) are Periplasmic-facing. The helical transmembrane segment at 192-212 (LMLLPVVLLVFGLAGSLVVLW) threads the bilayer. Residues 213-220 (KKKYGNRG) are Cytoplasmic-facing.

Belongs to the DedA family.

It localises to the cell inner membrane. Its function is as follows. May be a membrane transporter required for proton motive force (PMF)-dependent drug efflux. Required, with YghB, for the proper export of certain periplasmic amidases and, possibly, other Tat substrates. May play a role in determining membrane lipid composition. In Escherichia coli (strain K12), this protein is Inner membrane protein YqjA (yqjA).